A 157-amino-acid polypeptide reads, in one-letter code: Small ribosomal subunit protein uS7 (157 aa).

The protein belongs to the universal ribosomal protein uS7 family. As to quaternary structure, part of the 30S ribosomal subunit. Contacts proteins S9 and S11.

Functionally, one of the primary rRNA binding proteins, it binds directly to 16S rRNA where it nucleates assembly of the head domain of the 30S subunit. Is located at the subunit interface close to the decoding center, probably blocks exit of the E-site tRNA. This Leptospira interrogans serogroup Icterohaemorrhagiae serovar copenhageni (strain Fiocruz L1-130) protein is Small ribosomal subunit protein uS7.